The following is a 1024-amino-acid chain: Beta-galactosidase (1024 aa).

Residues N103 and D202 each coordinate substrate. D202 provides a ligand contact to Na(+). 3 residues coordinate Mg(2+): E417, H419, and E462. Residues E462 and 538-541 each bind substrate; that span reads EYAH. The active-site Proton donor is the E462. Residue E538 is the Nucleophile of the active site. N598 lines the Mg(2+) pocket. Na(+)-binding residues include F602 and N605. Substrate-binding residues include N605 and W1000.

Belongs to the glycosyl hydrolase 2 family. Homotetramer. Mg(2+) serves as cofactor. It depends on Na(+) as a cofactor.

The enzyme catalyses Hydrolysis of terminal non-reducing beta-D-galactose residues in beta-D-galactosides.. This is Beta-galactosidase from Escherichia coli (strain ATCC 8739 / DSM 1576 / NBRC 3972 / NCIMB 8545 / WDCM 00012 / Crooks).